The chain runs to 679 residues: UvrABC system protein B (679 aa).

Residues glutamate 31–isoleucine 414 enclose the Helicase ATP-binding domain. Glycine 44–threonine 51 contributes to the ATP binding site. Positions tyrosine 97–isoleucine 120 match the Beta-hairpin motif. Residues glutamine 436 to isoleucine 589 form the Helicase C-terminal domain. In terms of domain architecture, UVR spans glutamine 639–glutamine 674.

This sequence belongs to the UvrB family. In terms of assembly, forms a heterotetramer with UvrA during the search for lesions. Interacts with UvrC in an incision complex.

Its subcellular location is the cytoplasm. The UvrABC repair system catalyzes the recognition and processing of DNA lesions. A damage recognition complex composed of 2 UvrA and 2 UvrB subunits scans DNA for abnormalities. Upon binding of the UvrA(2)B(2) complex to a putative damaged site, the DNA wraps around one UvrB monomer. DNA wrap is dependent on ATP binding by UvrB and probably causes local melting of the DNA helix, facilitating insertion of UvrB beta-hairpin between the DNA strands. Then UvrB probes one DNA strand for the presence of a lesion. If a lesion is found the UvrA subunits dissociate and the UvrB-DNA preincision complex is formed. This complex is subsequently bound by UvrC and the second UvrB is released. If no lesion is found, the DNA wraps around the other UvrB subunit that will check the other stand for damage. In Haemophilus influenzae (strain ATCC 51907 / DSM 11121 / KW20 / Rd), this protein is UvrABC system protein B.